Consider the following 95-residue polypeptide: Co-chaperonin GroES (95 aa).

The protein belongs to the GroES chaperonin family. Heptamer of 7 subunits arranged in a ring. Interacts with the chaperonin GroEL.

It is found in the cytoplasm. Functionally, together with the chaperonin GroEL, plays an essential role in assisting protein folding. The GroEL-GroES system forms a nano-cage that allows encapsulation of the non-native substrate proteins and provides a physical environment optimized to promote and accelerate protein folding. GroES binds to the apical surface of the GroEL ring, thereby capping the opening of the GroEL channel. The sequence is that of Co-chaperonin GroES from Ruegeria pomeroyi (strain ATCC 700808 / DSM 15171 / DSS-3) (Silicibacter pomeroyi).